The chain runs to 1063 residues: Coiled-coil domain-containing protein 187 (1063 aa).

7 disordered regions span residues 1-41 (MPTL…AADW), 62-184 (RWPG…SRLH), 219-278 (RVEA…KDED), 300-319 (PPPV…PALT), 392-484 (RKGG…ERLG), 496-539 (GQAC…ATQP), and 551-658 (WEDP…LEEK). Over residues 111–124 (SSVSSGRLSCSSGG) the composition is skewed to low complexity. Residues 146–160 (RKSDARLEQLRDKIR) show a composition bias toward basic and acidic residues. A compositionally biased stretch (polar residues) spans 163 to 181 (AWQQGSCASLGTSAPSSAS). Positions 219–233 (RVEAKASHGQGRELS) are enriched in basic and acidic residues. Basic and acidic residues-rich tracts occupy residues 431 to 442 (TERKHSSLERAR) and 472 to 484 (SFQR…ERLG). Low complexity predominate over residues 508–517 (QRQGPSSQRP). Residues 816-851 (HLRHKQAQLQALETTAKVLKQRVDSLTAKLQGAEAL) are a coiled coil. Positions 1010-1030 (PRSCGKGDPADRPWAGWSGGR) are disordered.

The chain is Coiled-coil domain-containing protein 187 from Homo sapiens (Human).